We begin with the raw amino-acid sequence, 526 residues long: Glucose-6-phosphate isomerase (526 aa).

The active-site Proton donor is glutamate 320. Residues histidine 349 and lysine 453 contribute to the active site.

Belongs to the GPI family.

The protein resides in the cytoplasm. It carries out the reaction alpha-D-glucose 6-phosphate = beta-D-fructose 6-phosphate. Its pathway is carbohydrate biosynthesis; gluconeogenesis. It functions in the pathway carbohydrate degradation; glycolysis; D-glyceraldehyde 3-phosphate and glycerone phosphate from D-glucose: step 2/4. In terms of biological role, catalyzes the reversible isomerization of glucose-6-phosphate to fructose-6-phosphate. This Gloeothece citriformis (strain PCC 7424) (Cyanothece sp. (strain PCC 7424)) protein is Glucose-6-phosphate isomerase.